A 176-amino-acid chain; its full sequence is Tumor necrosis factor receptor superfamily member 23 (176 aa).

Residues 1-29 form the signal peptide; the sequence is MVTFSHVSSLSHWFLLLLLLNLFLPVIFA. TNFR-Cys repeat units lie at residues 37-72, 74-114, and 115-155; these read NCPD…QGQC, KCHP…DRKC, and ECQI…NTVC. Disulfide bonds link C38-C49, C50-C63, C53-C72, C75-C90, C93-C106, C96-C114, C116-C131, C134-C147, and C137-C155. Residue N148 is glycosylated (N-linked (GlcNAc...) asparagine). C155 is lipidated: GPI-anchor amidated cysteine. The propeptide at 156–176 is removed in mature form; sequence SSSVSNPRNWLFLLMLIVFCI.

In terms of tissue distribution, ubiquitous.

It is found in the cell membrane. In terms of biological role, receptor for the cytotoxic ligand TRAIL. Lacks a cytoplasmic death domain and hence is not capable of inducing apoptosis. May protect cells against TRAIL mediated apoptosis through ligand competition. Cannot induce the NF-kappa-B pathway. The polypeptide is Tumor necrosis factor receptor superfamily member 23 (Tnfrsf23) (Mus musculus (Mouse)).